Consider the following 164-residue polypeptide: MADMAENNRAVIKLREKFASSILEVKEFRGEVTVIVRKEDIVALCKFLKEELRYNLLTDVTAVDYLGKDPRFMVVYNIYSIPNKDRLRIKAPVTEGECTIDTVCGVWTTANWLEREAYDLMGIIFKNHPDLRRIMMTDDWVGHPLRKDYPLQGPDREPYKGRLS.

The protein belongs to the complex I 30 kDa subunit family. In terms of assembly, NDH-1 is composed of 14 different subunits. Subunits NuoB, C, D, E, F, and G constitute the peripheral sector of the complex.

The protein localises to the cell inner membrane. It carries out the reaction a quinone + NADH + 5 H(+)(in) = a quinol + NAD(+) + 4 H(+)(out). Its function is as follows. NDH-1 shuttles electrons from NADH, via FMN and iron-sulfur (Fe-S) centers, to quinones in the respiratory chain. The immediate electron acceptor for the enzyme in this species is believed to be ubiquinone. Couples the redox reaction to proton translocation (for every two electrons transferred, four hydrogen ions are translocated across the cytoplasmic membrane), and thus conserves the redox energy in a proton gradient. This Geotalea uraniireducens (strain Rf4) (Geobacter uraniireducens) protein is NADH-quinone oxidoreductase subunit C.